The chain runs to 754 residues: Fibronectin type III domain-containing protein 1 (754 aa).

A signal peptide spans 1–19 (MKSWISISFLCMLFPLSNG). Disordered regions lie at residues 40 to 61 (SLQG…SQGG), 85 to 106 (AQIS…TQFS), and 130 to 163 (AQHS…AQSG). Residues 130-161 (AQHSQAGAQGSQFPQSAAHTAQHHQGTAQPAQ) are compositionally biased toward low complexity. Fibronectin type-III domains are found at residues 250-355 (PPQS…TPDL), 359-449 (APLN…TDKF), 453-545 (APRN…TKMD), 549-642 (EPMS…LPKP), and 645-742 (LVPN…SFPG). Residues 731–754 (SNLSSQQFSFPGQQVGQQQSNPWI) are disordered.

Prismatic layer of shell (at protein level). Expressed primarily in the mantle with highest level in the outer epithelium of the mantle edge and lower level in the mantle pallium.

Its subcellular location is the secreted. The sequence is that of Fibronectin type III domain-containing protein 1 from Margaritifera margaritifera (Freshwater pearl mussel).